Consider the following 397-residue polypeptide: Acetate kinase (397 aa).

Asn-7 contributes to the Mg(2+) binding site. Lys-14 contributes to the ATP binding site. Arg-91 contacts substrate. The Proton donor/acceptor role is filled by Asp-148. ATP contacts are provided by residues 208–212 (HLGNG), 283–285 (DFR), and 331–335 (GIGEN). Residue Glu-384 coordinates Mg(2+).

Belongs to the acetokinase family. In terms of assembly, homodimer. It depends on Mg(2+) as a cofactor. Mn(2+) serves as cofactor.

The protein localises to the cytoplasm. It carries out the reaction acetate + ATP = acetyl phosphate + ADP. It functions in the pathway metabolic intermediate biosynthesis; acetyl-CoA biosynthesis; acetyl-CoA from acetate: step 1/2. Its function is as follows. Catalyzes the formation of acetyl phosphate from acetate and ATP. Can also catalyze the reverse reaction. This Treponema denticola (strain ATCC 35405 / DSM 14222 / CIP 103919 / JCM 8153 / KCTC 15104) protein is Acetate kinase.